The chain runs to 67 residues: UPF0434 protein Bcep1808_2639 (67 aa).

It belongs to the UPF0434 family.

The polypeptide is UPF0434 protein Bcep1808_2639 (Burkholderia vietnamiensis (strain G4 / LMG 22486) (Burkholderia cepacia (strain R1808))).